A 669-amino-acid chain; its full sequence is DNA ligase (669 aa).

Residues 33-37 (DLTYD), 82-83 (SL), and glutamate 115 each bind NAD(+). The active-site N6-AMP-lysine intermediate is the lysine 117. The NAD(+) site is built by arginine 138, glutamate 172, lysine 286, and lysine 310. Zn(2+) contacts are provided by cysteine 401, cysteine 404, cysteine 417, and cysteine 422.

It belongs to the NAD-dependent DNA ligase family. LigA subfamily. Mg(2+) serves as cofactor. Mn(2+) is required as a cofactor.

The enzyme catalyses NAD(+) + (deoxyribonucleotide)n-3'-hydroxyl + 5'-phospho-(deoxyribonucleotide)m = (deoxyribonucleotide)n+m + AMP + beta-nicotinamide D-nucleotide.. Its function is as follows. DNA ligase that catalyzes the formation of phosphodiester linkages between 5'-phosphoryl and 3'-hydroxyl groups in double-stranded DNA using NAD as a coenzyme and as the energy source for the reaction. It is essential for DNA replication and repair of damaged DNA. This is DNA ligase from Borrelia hermsii (strain HS1 / DAH).